A 412-amino-acid polypeptide reads, in one-letter code: MAIKSLNDLLAEGVSGKGVLVRSDLNVPLEYLDGNIAHISDPGRIVASVPTIRALAGAGAKVIVTAHLGRPDGKPDPKLSLAPVGAALGELLGQHVQVAGDVVGTDALARAEGLTDGDVLLLENIRFDPRETSKDDAQRLALARELAELVGGPTGTGGAFVSDGFGVVHRKQASVYDVATLLPHYAGGLVAAEVEVLRVLTASTERPYAVVLGGSKVSDKLAVIESLATKADSLVIGGGMCFTFLAAQGLPVGKSLVQLEMVDTCKRLLDTYADVIHLPMDIVAADEFAADSPSEIVAADAIPDSKMGLDIGPESVKRFAAVLSNAKTIFWNGPMGVFEFPAFAAGTRGVAEAIIAATEKGAFSVVGGGDSAAAVRALDLPDDGFSHISTGGGASLEYLEGKVLPGIDVLED.

Substrate contacts are provided by residues 24–26 (DLN), Arg44, 67–70 (HLGR), Arg126, and Arg170. ATP-binding positions include Lys220, Gly308, Glu339, and 368–371 (GGDS).

This sequence belongs to the phosphoglycerate kinase family. As to quaternary structure, monomer.

Its subcellular location is the cytoplasm. The catalysed reaction is (2R)-3-phosphoglycerate + ATP = (2R)-3-phospho-glyceroyl phosphate + ADP. Its pathway is carbohydrate degradation; glycolysis; pyruvate from D-glyceraldehyde 3-phosphate: step 2/5. The polypeptide is Phosphoglycerate kinase (Mycobacteroides abscessus (strain ATCC 19977 / DSM 44196 / CCUG 20993 / CIP 104536 / JCM 13569 / NCTC 13031 / TMC 1543 / L948) (Mycobacterium abscessus)).